We begin with the raw amino-acid sequence, 296 residues long: UDP-N-acetylglucosamine transporter TMEM241 (296 aa).

The next 10 membrane-spanning stretches (helical) occupy residues 7-29 (LVGL…VLSV), 32-52 (FTYP…LLHV), 67-87 (SHVL…YAGS), 93-113 (LAIP…CGYQ), 121-141 (TSPA…CLPF), 146-166 (FNPD…AYKI), 187-207 (IFSV…FSVL), 211-231 (FLYF…GFFL), 250-270 (WIFF…DAIL), and 271-291 (TSAT…LVFS).

The protein belongs to the nucleotide-sugar transporter family. SLC35A subfamily.

It is found in the golgi apparatus. Its subcellular location is the cis-Golgi network membrane. In terms of biological role, golgi-localized UDP-N-acetylglucosamine (UDP-GlcNAc) transporter that transports UDP-N-acetylglucosamine into Golgi lumen. Contributes to lysosomal targeting of NPC2, a key protein required for lysosomal cholesterol exiting, and that utilizes the mannose-6-phosphate (M6P) modification pathway for its lysosomal targeting. This is UDP-N-acetylglucosamine transporter TMEM241 from Homo sapiens (Human).